A 115-amino-acid polypeptide reads, in one-letter code: NADH-ubiquinone oxidoreductase chain 3 (115 aa).

Transmembrane regions (helical) follow at residues 4 to 24 (LMVLTVNMMLSTCLILIAFWL), 55 to 75 (FFLVAITFLLFDLEIALLLPL), and 84 to 104 (INIMTLTSFILVSVLALGLAY).

Belongs to the complex I subunit 3 family. As to quaternary structure, core subunit of respiratory chain NADH dehydrogenase (Complex I) which is composed of 45 different subunits. Interacts with TMEM186. Interacts with TMEM242.

It localises to the mitochondrion membrane. The catalysed reaction is a ubiquinone + NADH + 5 H(+)(in) = a ubiquinol + NAD(+) + 4 H(+)(out). Functionally, core subunit of the mitochondrial membrane respiratory chain NADH dehydrogenase (Complex I) that is believed to belong to the minimal assembly required for catalysis. Complex I functions in the transfer of electrons from NADH to the respiratory chain. The immediate electron acceptor for the enzyme is believed to be ubiquinone. The chain is NADH-ubiquinone oxidoreductase chain 3 from Onychomys leucogaster (Northern grasshopper mouse).